Consider the following 156-residue polypeptide: ATP synthase subunit b (156 aa).

A helical membrane pass occupies residues 12–32 (VAFLIFVLFCMKYVWPPVITA).

Belongs to the ATPase B chain family. As to quaternary structure, F-type ATPases have 2 components, F(1) - the catalytic core - and F(0) - the membrane proton channel. F(1) has five subunits: alpha(3), beta(3), gamma(1), delta(1), epsilon(1). F(0) has three main subunits: a(1), b(2) and c(10-14). The alpha and beta chains form an alternating ring which encloses part of the gamma chain. F(1) is attached to F(0) by a central stalk formed by the gamma and epsilon chains, while a peripheral stalk is formed by the delta and b chains.

Its subcellular location is the cell inner membrane. Functionally, f(1)F(0) ATP synthase produces ATP from ADP in the presence of a proton or sodium gradient. F-type ATPases consist of two structural domains, F(1) containing the extramembraneous catalytic core and F(0) containing the membrane proton channel, linked together by a central stalk and a peripheral stalk. During catalysis, ATP synthesis in the catalytic domain of F(1) is coupled via a rotary mechanism of the central stalk subunits to proton translocation. Its function is as follows. Component of the F(0) channel, it forms part of the peripheral stalk, linking F(1) to F(0). This Pseudomonas putida (strain ATCC 47054 / DSM 6125 / CFBP 8728 / NCIMB 11950 / KT2440) protein is ATP synthase subunit b.